Consider the following 459-residue polypeptide: Argininosuccinate lyase (459 aa).

It belongs to the lyase 1 family. Argininosuccinate lyase subfamily.

The protein resides in the cytoplasm. It carries out the reaction 2-(N(omega)-L-arginino)succinate = fumarate + L-arginine. Its pathway is amino-acid biosynthesis; L-arginine biosynthesis; L-arginine from L-ornithine and carbamoyl phosphate: step 3/3. This is Argininosuccinate lyase from Lactococcus lactis subsp. cremoris (strain MG1363).